The chain runs to 175 residues: Cuticle protein 16.5, isoform A (175 aa).

Repeat copies occupy residues Ala-17–Ala-20, Ala-25–Ala-28, Ala-31–Ala-34, Ala-38–Ala-41, Ala-44–Ala-47, Ala-51–Ala-54, Ala-57–Ala-60, Ala-64–Ala-67, Ala-70–Ala-73, Ala-77–Ala-80, Ala-83–Ala-86, Ala-91–Ala-94, Ala-99–Ala-102, Ala-106–Ala-109, Ala-134–Ala-137, Ala-144–Ala-147, Ala-151–Ala-154, Ala-158–Ala-161, and Ala-165–Ala-168.

Functionally, component of the cuticle of migratory locust which contains more than 100 different structural proteins. This Locusta migratoria (Migratory locust) protein is Cuticle protein 16.5, isoform A.